A 62-amino-acid chain; its full sequence is Large ribosomal subunit protein uL29 (62 aa).

Belongs to the universal ribosomal protein uL29 family.

The polypeptide is Large ribosomal subunit protein uL29 (Ruthia magnifica subsp. Calyptogena magnifica).